The sequence spans 339 residues: Uroporphyrinogen decarboxylase (339 aa).

Residues 23–27 (RQAGR), Asp72, Tyr147, Thr202, and His315 contribute to the substrate site.

It belongs to the uroporphyrinogen decarboxylase family. In terms of assembly, homodimer.

Its subcellular location is the cytoplasm. The enzyme catalyses uroporphyrinogen III + 4 H(+) = coproporphyrinogen III + 4 CO2. It functions in the pathway porphyrin-containing compound metabolism; protoporphyrin-IX biosynthesis; coproporphyrinogen-III from 5-aminolevulinate: step 4/4. Its function is as follows. Catalyzes the decarboxylation of four acetate groups of uroporphyrinogen-III to yield coproporphyrinogen-III. This Geotalea daltonii (strain DSM 22248 / JCM 15807 / FRC-32) (Geobacter daltonii) protein is Uroporphyrinogen decarboxylase.